The following is a 320-amino-acid chain: UV DNA damage endonuclease (320 aa).

This sequence belongs to the uve1/UvsE family.

In terms of biological role, component in a DNA repair pathway. Removal of UV LIGHT damaged nucleotides. Recognizes pyrimidine dimers and cleave a phosphodiester bond immediately 5' to the lesion. This Bacillus velezensis (strain DSM 23117 / BGSC 10A6 / LMG 26770 / FZB42) (Bacillus amyloliquefaciens subsp. plantarum) protein is UV DNA damage endonuclease.